A 212-amino-acid polypeptide reads, in one-letter code: MSFVVAIDGPAAAGKGTLSRLIAKRYGFHHLDTGLTYRAAAKALIDAGLPLDDEAVAEKTARQVDLSGLDRAVLSAHAIGEAASKIAVMPAVRRALVEAQRAFALKEPGTVLDGRDIGTVVCPDAAVKLYVTASPEVRAKRRYDEIVTGGGTADYTTIFEDVKKRDTRDMGRADSPLRPAEDAHLLDTSEMSIEAAFQAAKTLIDVALNKTI.

Residue 9–17 (GPAAAGKGT) participates in ATP binding.

The protein belongs to the cytidylate kinase family. Type 1 subfamily.

It is found in the cytoplasm. The enzyme catalyses CMP + ATP = CDP + ADP. It carries out the reaction dCMP + ATP = dCDP + ADP. This is Cytidylate kinase from Sinorhizobium medicae (strain WSM419) (Ensifer medicae).